The sequence spans 408 residues: LL-diaminopimelate aminotransferase (408 aa).

Substrate contacts are provided by Y15 and G42. Pyridoxal 5'-phosphate contacts are provided by residues Y72, 108-109, Y132, N187, Y218, and 246-248; these read SK and SFS. The substrate site is built by K109, Y132, and N187. Position 249 is an N6-(pyridoxal phosphate)lysine (K249). The pyridoxal 5'-phosphate site is built by R257 and N292. Residues N292 and R388 each contribute to the substrate site.

Belongs to the class-I pyridoxal-phosphate-dependent aminotransferase family. LL-diaminopimelate aminotransferase subfamily. As to quaternary structure, homodimer. The cofactor is pyridoxal 5'-phosphate.

The catalysed reaction is (2S,6S)-2,6-diaminopimelate + 2-oxoglutarate = (S)-2,3,4,5-tetrahydrodipicolinate + L-glutamate + H2O + H(+). Its pathway is amino-acid biosynthesis; L-lysine biosynthesis via DAP pathway; LL-2,6-diaminopimelate from (S)-tetrahydrodipicolinate (aminotransferase route): step 1/1. Involved in the synthesis of meso-diaminopimelate (m-DAP or DL-DAP), required for both lysine and peptidoglycan biosynthesis. Catalyzes the direct conversion of tetrahydrodipicolinate to LL-diaminopimelate. The protein is LL-diaminopimelate aminotransferase of Prochlorococcus marinus subsp. pastoris (strain CCMP1986 / NIES-2087 / MED4).